The primary structure comprises 207 residues: Guanylate kinase (207 aa).

Positions 4–184 (GTLYIVSAPS…ALTDLKTIIR (181 aa)) constitute a Guanylate kinase-like domain. 11–18 (APSGAGKS) contributes to the ATP binding site.

This sequence belongs to the guanylate kinase family.

It localises to the cytoplasm. The enzyme catalyses GMP + ATP = GDP + ADP. In terms of biological role, essential for recycling GMP and indirectly, cGMP. The sequence is that of Guanylate kinase from Escherichia coli O157:H7.